We begin with the raw amino-acid sequence, 136 residues long: ATP synthase epsilon chain (136 aa).

It belongs to the ATPase epsilon chain family. As to quaternary structure, F-type ATPases have 2 components, CF(1) - the catalytic core - and CF(0) - the membrane proton channel. CF(1) has five subunits: alpha(3), beta(3), gamma(1), delta(1), epsilon(1). CF(0) has three main subunits: a, b and c.

The protein resides in the cell inner membrane. Functionally, produces ATP from ADP in the presence of a proton gradient across the membrane. This is ATP synthase epsilon chain from Afipia carboxidovorans (strain ATCC 49405 / DSM 1227 / KCTC 32145 / OM5) (Oligotropha carboxidovorans).